Here is a 381-residue protein sequence, read N- to C-terminus: E3 ubiquitin-protein ligase ATL15 (381 aa).

The signal sequence occupies residues 1-23 (MVVMSRVSFYSSFLLLLLEVVVA). A helical membrane pass occupies residues 40 to 60 (AIIMIVLVSVFFALGCISVYM). The segment at 118 to 160 (CPVCLNEFEDDETLRLIPQCCHVFHPGCIDAWLRSQTTCPLCR) adopts an RING-type; atypical zinc-finger fold.

This sequence belongs to the RING-type zinc finger family. ATL subfamily.

The protein localises to the membrane. The catalysed reaction is S-ubiquitinyl-[E2 ubiquitin-conjugating enzyme]-L-cysteine + [acceptor protein]-L-lysine = [E2 ubiquitin-conjugating enzyme]-L-cysteine + N(6)-ubiquitinyl-[acceptor protein]-L-lysine.. It participates in protein modification; protein ubiquitination. Its function is as follows. E3 ubiquitin-protein ligase able to catalyze polyubiquitination with ubiquitin-conjugating enzyme E2 UBC8, UBC10, UBC11, UBC28 and UBC29 in vitro. The polypeptide is E3 ubiquitin-protein ligase ATL15 (ATL15) (Arabidopsis thaliana (Mouse-ear cress)).